Consider the following 446-residue polypeptide: Glucosylglycerate hydrolase (446 aa).

Substrate is bound by residues Tyr36, 40–43 (WSWD), Tyr88, Gln115, and Gly180. The Proton donor role is filled by Asp182. Residues Arg216 and 375-376 (YW) contribute to the substrate site. The active-site Proton acceptor is Glu419. Gln434 is a substrate binding site.

Belongs to the glycosyl hydrolase 63 family. As to quaternary structure, homotetramer. Dimer of dimers.

It carries out the reaction (2R)-2-O-(alpha-D-glucopyranosyl)-glycerate + H2O = (R)-glycerate + D-glucose. Its activity is regulated as follows. Activity is not dependent on divalent cations, but it is enhanced by Mg(2+). Its function is as follows. Catalyzes the hydrolysis of glucosylglycerate (GG) to glycerate and glucose. Involved in recovery from nitrogen starvation by promoting the rapid mobilization of the glucosylglycerate that accumulates under these conditions. Can also hydrolyze mannosylglycerate (MG), with tenfold lower efficiency. The chain is Glucosylglycerate hydrolase from Mycolicibacterium hassiacum (strain DSM 44199 / CIP 105218 / JCM 12690 / 3849) (Mycobacterium hassiacum).